A 225-amino-acid chain; its full sequence is Enolase-phosphatase E1 (225 aa).

Belongs to the HAD-like hydrolase superfamily. MasA/MtnC family. As to quaternary structure, monomer. Mg(2+) is required as a cofactor.

It carries out the reaction 5-methylsulfanyl-2,3-dioxopentyl phosphate + H2O = 1,2-dihydroxy-5-(methylsulfanyl)pent-1-en-3-one + phosphate. It participates in amino-acid biosynthesis; L-methionine biosynthesis via salvage pathway; L-methionine from S-methyl-5-thio-alpha-D-ribose 1-phosphate: step 3/6. The protein operates within amino-acid biosynthesis; L-methionine biosynthesis via salvage pathway; L-methionine from S-methyl-5-thio-alpha-D-ribose 1-phosphate: step 4/6. In terms of biological role, bifunctional enzyme that catalyzes the enolization of 2,3-diketo-5-methylthiopentyl-1-phosphate (DK-MTP-1-P) into the intermediate 2-hydroxy-3-keto-5-methylthiopentenyl-1-phosphate (HK-MTPenyl-1-P), which is then dephosphorylated to form the acireductone 1,2-dihydroxy-3-keto-5-methylthiopentene (DHK-MTPene). This chain is Enolase-phosphatase E1, found in Shewanella halifaxensis (strain HAW-EB4).